The chain runs to 309 residues: Fructosamine-3-kinase (309 aa).

At Met-1 the chain carries N-acetylmethionine. Glu-89 to Leu-91 is an ATP binding site. Asp-217 functions as the Proton acceptor in the catalytic mechanism.

This sequence belongs to the fructosamine kinase family. In terms of assembly, monomer. As to expression, expressed in red blood cells, brain, heart, kidney and muscle. Lower expression is observed in liver. Not expressed in lung, spleen, testis and thymus.

The catalysed reaction is N(6)-(D-fructosyl)-L-lysyl-[protein] + ATP = N(6)-(3-O-phospho-D-fructosyl)-L-lysyl-[protein] + ADP + H(+). The enzyme catalyses N(6)-D-ribulosyl-L-lysyl-[protein] + ATP = N(6)-(3-O-phospho-D-ribulosyl)-L-lysyl-[protein] + ADP + H(+). It carries out the reaction N(6)-(D-psicosyl)-L-lysyl-[protein] + ATP = N(6)-(3-O-phospho-D-psicosyl)-L-lysyl-[protein] + ADP + H(+). Functionally, fructosamine-3-kinase involved in protein deglycation by mediating phosphorylation of fructoselysine residues on glycated proteins, to generate fructoselysine-3 phosphate. Fructoselysine-3 phosphate adducts are unstable and decompose under physiological conditions. Involved in intracellular deglycation in erythrocytes and pancreatic islets. Involved in the response to oxidative stress by mediating deglycation of NFE2L2/NRF2, glycation impairing NFE2L2/NRF2 function. Also able to phosphorylate psicosamines and ribulosamines. In Mus musculus (Mouse), this protein is Fructosamine-3-kinase.